The chain runs to 198 residues: MSKVLYVKANIKNEGESRTFKVSDSFVEEYKKNNPEDEIITLDLYKENIDFLRVDDLGKLFGTKDEESKNNSILKYAYQFADADKYIIAAPMWNISFPAILKAYIDYVSVSGITFKYTAEGPVGLLNNKKAVHIVSRGGGYDNSPYEMGDRYLRTILGFFGIKDIETIAIDNLDVMGVNVKEKVEEGIEKAISLAKKF.

136 to 139 contacts FMN; sequence SRGG.

This sequence belongs to the azoreductase type 1 family. Homodimer. FMN is required as a cofactor.

It catalyses the reaction 2 a quinone + NADH + H(+) = 2 a 1,4-benzosemiquinone + NAD(+). The catalysed reaction is N,N-dimethyl-1,4-phenylenediamine + anthranilate + 2 NAD(+) = 2-(4-dimethylaminophenyl)diazenylbenzoate + 2 NADH + 2 H(+). In terms of biological role, quinone reductase that provides resistance to thiol-specific stress caused by electrophilic quinones. Functionally, also exhibits azoreductase activity. Catalyzes the reductive cleavage of the azo bond in aromatic azo compounds to the corresponding amines. The chain is FMN-dependent NADH:quinone oxidoreductase 2 from Clostridium perfringens (strain 13 / Type A).